The primary structure comprises 215 residues: Cytochrome b6 (215 aa).

A helical membrane pass occupies residues 32-52; the sequence is IFYCLGGITLVCFLIQFATGF. A heme c-binding site is contributed by Cys-35. The heme b site is built by His-86 and His-100. The next 3 helical transmembrane spans lie at 90-110, 116-136, and 186-206; these read ASMM…TGGF, LTWV…VTGY, and LHTF…FLMI. Residues His-187 and His-202 each coordinate heme b.

The protein belongs to the cytochrome b family. PetB subfamily. The 4 large subunits of the cytochrome b6-f complex are cytochrome b6, subunit IV (17 kDa polypeptide, PetD), cytochrome f and the Rieske protein, while the 4 small subunits are PetG, PetL, PetM and PetN. The complex functions as a dimer. It depends on heme b as a cofactor. Heme c is required as a cofactor.

Its subcellular location is the cellular thylakoid membrane. Functionally, component of the cytochrome b6-f complex, which mediates electron transfer between photosystem II (PSII) and photosystem I (PSI), cyclic electron flow around PSI, and state transitions. In Synechococcus sp. (strain JA-3-3Ab) (Cyanobacteria bacterium Yellowstone A-Prime), this protein is Cytochrome b6.